The chain runs to 313 residues: tRNA dimethylallyltransferase (313 aa).

ATP is bound at residue Gly-11–Thr-18. Residue Thr-13 to Thr-18 participates in substrate binding. Interaction with substrate tRNA regions lie at residues Asp-36–Leu-39, Gln-160–Arg-164, and Arg-241–Arg-246.

Belongs to the IPP transferase family. As to quaternary structure, monomer. It depends on Mg(2+) as a cofactor.

It carries out the reaction adenosine(37) in tRNA + dimethylallyl diphosphate = N(6)-dimethylallyladenosine(37) in tRNA + diphosphate. Functionally, catalyzes the transfer of a dimethylallyl group onto the adenine at position 37 in tRNAs that read codons beginning with uridine, leading to the formation of N6-(dimethylallyl)adenosine (i(6)A). In Haemophilus ducreyi (strain 35000HP / ATCC 700724), this protein is tRNA dimethylallyltransferase.